Reading from the N-terminus, the 138-residue chain is Nucleoside diphosphate kinase (138 aa).

Residues Lys-10, Phe-58, Arg-86, Thr-92, Arg-103, and Asn-113 each coordinate ATP. Residue His-116 is the Pros-phosphohistidine intermediate of the active site.

It belongs to the NDK family. As to quaternary structure, homotetramer. It depends on Mg(2+) as a cofactor.

Its subcellular location is the cytoplasm. It carries out the reaction a 2'-deoxyribonucleoside 5'-diphosphate + ATP = a 2'-deoxyribonucleoside 5'-triphosphate + ADP. The enzyme catalyses a ribonucleoside 5'-diphosphate + ATP = a ribonucleoside 5'-triphosphate + ADP. Its function is as follows. Major role in the synthesis of nucleoside triphosphates other than ATP. The ATP gamma phosphate is transferred to the NDP beta phosphate via a ping-pong mechanism, using a phosphorylated active-site intermediate. This Actinobacillus pleuropneumoniae serotype 7 (strain AP76) protein is Nucleoside diphosphate kinase.